The following is a 98-amino-acid chain: Large ribosomal subunit protein eL30 (98 aa).

The protein belongs to the eukaryotic ribosomal protein eL30 family.

This chain is Large ribosomal subunit protein eL30, found in Methanosphaera stadtmanae (strain ATCC 43021 / DSM 3091 / JCM 11832 / MCB-3).